The sequence spans 449 residues: C4-dicarboxylate transport protein (449 aa).

The disordered stretch occupies residues M1–A20. Residues P10–A20 show a composition bias toward low complexity. The next 8 membrane-spanning stretches (helical) occupy residues L28–P48, L66–I86, L101–V121, G167–G187, F205–F225, L241–A261, I326–T346, and F370–I390.

It belongs to the dicarboxylate/amino acid:cation symporter (DAACS) (TC 2.A.23) family.

The protein localises to the cell inner membrane. Its function is as follows. Responsible for the transport of dicarboxylates such as succinate, fumarate, and malate from the periplasm across the membrane. In Rhodopseudomonas palustris (strain BisB18), this protein is C4-dicarboxylate transport protein.